The sequence spans 339 residues: Putative ABC transporter ATP-binding protein MG467 homolog (339 aa).

Positions 41–87 (KKTKKAKPAKVKKVKEPKAKAVKPEQVKPTKTTKAPKPKKPKKQGGL) are disordered. A compositionally biased stretch (basic residues) spans 42 to 53 (KTKKAKPAKVKK). Over residues 54–68 (VKEPKAKAVKPEQVK) the composition is skewed to basic and acidic residues. Positions 74–83 (KAPKPKKPKK) are enriched in basic residues. An ABC transporter domain is found at 112–338 (ISIDKMWKHV…IVSNELVRPL (227 aa)). 150-157 (GPSGSGKT) is an ATP binding site.

This sequence belongs to the ABC transporter superfamily.

In Mycoplasma pneumoniae (strain ATCC 29342 / M129 / Subtype 1) (Mycoplasmoides pneumoniae), this protein is Putative ABC transporter ATP-binding protein MG467 homolog.